A 535-amino-acid chain; its full sequence is Probable acyl-activating enzyme 22 (535 aa).

The protein belongs to the ATP-dependent AMP-binding enzyme family.

May act as an acid--thiol ligase that activates carboxylic acids by forming acyl-CoAs. This is Probable acyl-activating enzyme 22 (AEE22) from Arabidopsis thaliana (Mouse-ear cress).